A 566-amino-acid polypeptide reads, in one-letter code: Serine/threonine-protein kinase PknE (566 aa).

Residues 1-337 lie on the Cytoplasmic side of the membrane; the sequence is MDGTAESREG…PLPRSARQPW (337 aa). Position 7 is a phosphoserine; by autocatalysis (S7). T11 is modified (phosphothreonine; by autocatalysis). The region spanning 16–275 is the Protein kinase domain; that stretch reads YRLRRLVGRG…DLSAAAHAAL (260 aa). ATP-binding positions include 22-30 and K45; that span reads VGRGGMGDV. Residues T50 and T59 each carry the phosphothreonine; by autocatalysis modification. D139 serves as the catalytic Proton acceptor. 3 positions are modified to phosphothreonine; by autocatalysis: T170, T175, and T178. The disordered stretch occupies residues 296–330; it reads PVPSTHPVSPGTRWPQPTPWAGGAPPWGPPSSPLP. A helical membrane pass occupies residues 338 to 358; it reads LWVGVAVAVVVALAGGLGIAL. Residues 359-566 are Extracellular-facing; the sequence is AHPWRSSGPR…DPSWLARLIG (208 aa).

Belongs to the protein kinase superfamily. Ser/Thr protein kinase family. Post-translationally, autophosphorylated on serine and threonine residues. Dephosphorylated by PstP.

It is found in the cell membrane. It catalyses the reaction L-seryl-[protein] + ATP = O-phospho-L-seryl-[protein] + ADP + H(+). It carries out the reaction L-threonyl-[protein] + ATP = O-phospho-L-threonyl-[protein] + ADP + H(+). In Mycobacterium bovis (strain ATCC BAA-935 / AF2122/97), this protein is Serine/threonine-protein kinase PknE (pknE).